Here is a 201-residue protein sequence, read N- to C-terminus: Urease accessory protein UreG (201 aa).

11 to 18 provides a ligand contact to GTP; the sequence is GPVGSGKT.

Belongs to the SIMIBI class G3E GTPase family. UreG subfamily. As to quaternary structure, homodimer. UreD, UreF and UreG form a complex that acts as a GTP-hydrolysis-dependent molecular chaperone, activating the urease apoprotein by helping to assemble the nickel containing metallocenter of UreC. The UreE protein probably delivers the nickel.

The protein localises to the cytoplasm. Its function is as follows. Facilitates the functional incorporation of the urease nickel metallocenter. This process requires GTP hydrolysis, probably effectuated by UreG. In Prochlorococcus marinus subsp. pastoris (strain CCMP1986 / NIES-2087 / MED4), this protein is Urease accessory protein UreG.